Consider the following 488-residue polypeptide: 3-octaprenyl-4-hydroxybenzoate carboxy-lyase (488 aa).

Position 172 (asparagine 172) interacts with Mn(2+). Residues 175–177 (IYR), 189–191 (RWL), and 194–195 (RG) contribute to the prenylated FMN site. Position 238 (glutamate 238) interacts with Mn(2+). Aspartate 287 serves as the catalytic Proton donor.

This sequence belongs to the UbiD family. As to quaternary structure, homohexamer. Prenylated FMN is required as a cofactor. Requires Mn(2+) as cofactor.

The protein resides in the cell membrane. The enzyme catalyses a 4-hydroxy-3-(all-trans-polyprenyl)benzoate + H(+) = a 2-(all-trans-polyprenyl)phenol + CO2. Its pathway is cofactor biosynthesis; ubiquinone biosynthesis. In terms of biological role, catalyzes the decarboxylation of 3-octaprenyl-4-hydroxy benzoate to 2-octaprenylphenol, an intermediate step in ubiquinone biosynthesis. The sequence is that of 3-octaprenyl-4-hydroxybenzoate carboxy-lyase from Pseudomonas fluorescens (strain SBW25).